A 577-amino-acid chain; its full sequence is CDPK-related kinase 7 (577 aa).

Residues 1 to 38 form a disordered region; sequence MGLCHGKPIEQQSKNLPISNEIEETPKNSSQKAKSSGF. Gly-2 carries the N-myristoyl glycine lipid modification. The region spanning 124-386 is the Protein kinase domain; it reads YEIDGEVGRG…AAQALCHPWL (263 aa). Residues 130–138 and Lys-156 each bind ATP; that span reads VGRGHFGYT. Catalysis depends on Asp-252, which acts as the Proton acceptor. A Phosphoserine modification is found at Ser-292. The residue at position 334 (Ser-334) is a Phosphoserine; by CPK1, CPK10 and CPK34. Residues 391–421 form an autoinhibitory domain region; sequence ELKIPSDMIIYKLVKVYIMSSSLRKSALAAL. A calmodulin binding (CaMBD) region spans residues 410-430; the sequence is SSSLRKSALAALAKTLTVPQL. EF-hand domains follow at residues 428–464, 465–500, 501–540, and 543–572; these read PQLT…STEA, TKDS…VYQL, EAME…GPSV, and HVVL…VSSR. 10 residues coordinate Ca(2+): Ser-443, Asn-445, Tyr-447, Lys-484, Glu-489, Asp-520, Asn-522, Glu-529, Asp-554, and Lys-556. The residue at position 558 (Ser-558) is a Phosphoserine.

Belongs to the protein kinase superfamily. Ser/Thr protein kinase family. CDPK subfamily. Binds calmodulin (CaM) in a calcium-dependent manner. Post-translationally, autophosphorylated.

It is found in the membrane. The enzyme catalyses L-seryl-[protein] + ATP = O-phospho-L-seryl-[protein] + ADP + H(+). The catalysed reaction is L-threonyl-[protein] + ATP = O-phospho-L-threonyl-[protein] + ADP + H(+). With respect to regulation, activated by calcium and calmodulin. Autophosphorylation may play an important role in the regulation of the kinase activity. Functionally, may play a role in signal transduction pathways that involve calcium as a second messenger. This chain is CDPK-related kinase 7 (CRK7), found in Arabidopsis thaliana (Mouse-ear cress).